Reading from the N-terminus, the 490-residue chain is Beta-glucosidase 42 (490 aa).

A beta-D-glucoside-binding positions include Gln35, His137, Asn182–Glu183, Tyr317, and Glu388. Glu183 serves as the catalytic Proton donor. Residue Glu388 is the Nucleophile of the active site. Asn420 is a glycosylation site (N-linked (GlcNAc...) asparagine). A beta-D-glucoside contacts are provided by residues Trp437, Glu444–Trp445, and Phe453.

This sequence belongs to the glycosyl hydrolase 1 family. Expressed at low levels predominantly in root epidermal cells.

The catalysed reaction is Hydrolysis of terminal, non-reducing beta-D-glucosyl residues with release of beta-D-glucose.. Functionally, glucosidase that hydrolyzes scopolin and various beta-glucosides, cellooligosaccharides (mainly cellotriose) and laminarioligosaccharides. Can use p-nitrophenyl-beta-glucosides (pNP beta-Glc) and p-nitrophenyl-beta-D-fucosides (pNP beta-D-Fuc) as substrates, and, to a lower extent, beta-galactosides, beta-mannosides and beta-xylosides. Involved in the secretion of root-derived phenolics upon iron ions (Fe) depletion. Promotes disease resistance toward B.cinerea, H.arabidopsidis and P.syringae pv. tomato DC3000. Required during rhizobacteria-mediated (e.g. P.fluorescens WCS417r) broad-spectrum induced systemic resistance (ISR) against several pathogens. This is Beta-glucosidase 42 from Arabidopsis thaliana (Mouse-ear cress).